A 288-amino-acid polypeptide reads, in one-letter code: Proteasome assembly chaperone 1 (288 aa).

Residues 1–37 (MAATFFGEVVKAPCRAGTEDEEEEDEGRRETPEDREV) form a disordered region. The residue at position 2 (A2) is an N-acetylalanine. The residue at position 18 (T18) is a Phosphothreonine. The segment covering 26 to 37 (EGRRETPEDREV) has biased composition (basic and acidic residues). T54 is subject to Phosphothreonine. Phosphoserine is present on S180. At K264 the chain carries N6-acetyllysine.

The protein belongs to the PSMG1 family. Forms a heterodimer with PSMG2. The PSMG1-PSMG2 heterodimer interacts directly with the PSMA5 and PSMA7 proteasome alpha subunits. Degraded by the proteasome upon completion of 20S proteasome maturation.

The protein localises to the cytoplasm. Its subcellular location is the endoplasmic reticulum. Functionally, chaperone protein which promotes assembly of the 20S proteasome as part of a heterodimer with PSMG2. The PSMG1-PSMG2 heterodimer binds to the PSMA5 and PSMA7 proteasome subunits, promotes assembly of the proteasome alpha subunits into the heteroheptameric alpha ring and prevents alpha ring dimerization. The polypeptide is Proteasome assembly chaperone 1 (PSMG1) (Callithrix jacchus (White-tufted-ear marmoset)).